The primary structure comprises 228 residues: Mediator of RNA polymerase II transcription subunit 7-B (228 aa).

The protein belongs to the Mediator complex subunit 7 family. Component of the Mediator complex.

It localises to the nucleus. Functionally, component of the Mediator complex, a coactivator involved in the regulated transcription of nearly all RNA polymerase II-dependent genes. Mediator functions as a bridge to convey information from gene-specific regulatory proteins to the basal RNA polymerase II transcription machinery. Mediator is recruited to promoters by direct interactions with regulatory proteins and serves as a scaffold for the assembly of a functional preinitiation complex with RNA polymerase II and the general transcription factors. This is Mediator of RNA polymerase II transcription subunit 7-B (med7-b) from Xenopus laevis (African clawed frog).